The sequence spans 984 residues: Serine/threonine-protein kinase Nek9 (984 aa).

Residue Ser-2 is modified to N-acetylserine. A phosphoserine mark is found at Ser-2, Ser-13, Ser-16, and Ser-20. The disordered stretch occupies residues 14 to 43 (INSDFGSESGGGGDSGPGPSAVPGPRAGGG). Tyr-52 is modified (phosphotyrosine). Residues 52 to 308 (YIPIRVLGRG…ADALLDLPLL (257 aa)) form the Protein kinase domain. ATP is bound at residue 58 to 66 (LGRGAFGEA). The residue at position 76 (Ser-76) is a Phosphoserine. Lys-81 serves as a coordination point for ATP. Asp-176 (proton acceptor) is an active-site residue. Residue Thr-210 is modified to Phosphothreonine; by autocatalysis. At Thr-254 the chain carries Phosphothreonine. Residue Ser-331 is modified to Phosphoserine. Thr-333 is subject to Phosphothreonine. RCC1 repeat units lie at residues 388–444 (KELY…VTDE), 445–498 (GQLY…LTRN), 499–550 (KEVY…LTQS), 551–615 (GKVL…IDER), 616–668 (GRLL…ATDD), and 669–726 (NHIF…IVEK). Positions 732–896 (TIRSNSSGLS…GKALTSAACA (165 aa)) are interaction with NEK6. At Ser-741 the chain carries Phosphoserine. The tract at residues 744–790 (TVVQSSSPGGGIGGGGGGGGGGGGEEEDSQQESETPDPSGGFRGTME) is disordered. Residues 751–766 (PGGGIGGGGGGGGGGG) are compositionally biased toward gly residues. The segment covering 767-778 (GEEEDSQQESET) has biased composition (acidic residues). Residues Ser-808 and Ser-839 each carry the phosphoserine modification. Thr-891 carries the phosphothreonine modification. Positions 896–945 (ACSALQVEVDRLQALVLKCLEEQQKLQQENLQMFTQLQKLNKKLEGGQQV) form a coiled coil. The segment at 940-984 (EGGQQVGMHSRGTQTAKEEMEMDPKPDLDSESWCLLGTDSCRPSL) is disordered. Ser-949 bears the Phosphoserine mark. Positions 955–967 (AKEEMEMDPKPDL) are enriched in basic and acidic residues. Phosphoserine is present on Ser-983.

Belongs to the protein kinase superfamily. NEK Ser/Thr protein kinase family. NIMA subfamily. In terms of assembly, homodimer; homodimerization is required to activate NEK7. Binds to Ran GTPase. Has a greater affinity for Ran-GDP over Ran-GTP. Interacts with SSRP1 and SUPT16H, the 2 subunits of the FACT complex. Interacts with DYNLL1; phosphorylation at Ser-949 strongly reduces DYNLL1 binding. The cofactor is Mg(2+). In terms of processing, autophosphorylated on serine and threonine residues. When complexed with FACT, exhibits markedly elevated phosphorylation on Thr-210. During mitosis, not phosphorylated on Thr-210. Phosphorylated by CDK1 in vitro.

The protein localises to the cytoplasm. The protein resides in the nucleus. It catalyses the reaction L-seryl-[protein] + ATP = O-phospho-L-seryl-[protein] + ADP + H(+). It carries out the reaction L-threonyl-[protein] + ATP = O-phospho-L-threonyl-[protein] + ADP + H(+). Its activity is regulated as follows. Activated during mitosis by intramolecular autophosphorylation. Activity and autophosphorylation is activated by manganese &gt;&gt; magnesium ions. It is not cell-cycle regulated but activity is higher in G0-arrested cells. Its function is as follows. Pleiotropic regulator of mitotic progression, participating in the control of spindle dynamics and chromosome separation. Phosphorylates different histones, myelin basic protein, beta-casein, and BICD2. Phosphorylates histone H3 on serine and threonine residues and beta-casein on serine residues. Important for G1/S transition and S phase progression. Phosphorylates NEK6 and NEK7 and stimulates their activity by releasing the autoinhibitory functions of Tyr-108 and Tyr-97 respectively. In Mus musculus (Mouse), this protein is Serine/threonine-protein kinase Nek9.